Reading from the N-terminus, the 290-residue chain is UPF0507 protein YML003W (290 aa).

The protein belongs to the UPF0507 family.

The polypeptide is UPF0507 protein YML003W (Saccharomyces cerevisiae (strain ATCC 204508 / S288c) (Baker's yeast)).